A 104-amino-acid polypeptide reads, in one-letter code: uncharacterized protein (104 aa).

The next 2 membrane-spanning stretches (helical) occupy residues 47–67 (IDHRTWHIVGLCIFGFLLAML) and 72–92 (VGHVEDWFLITFAAVVLFVLA).

It to M.leprae ML1584.

The protein localises to the cell membrane. This is an uncharacterized protein from Mycobacterium tuberculosis (strain CDC 1551 / Oshkosh).